Here is a 145-residue protein sequence, read N- to C-terminus: Angiogenin (145 aa).

Positions Met1–Ala24 are cleaved as a signal peptide. Gln25 carries the pyrrolidone carboxylic acid modification. His37 functions as the Proton acceptor in the catalytic mechanism. TRNA-binding residues include Arg45 and Asp46. Disulfide bonds link Cys50–Cys104, Cys63–Cys115, and Cys81–Cys130. Residues Lys55 to Leu59 carry the Nucleolar localization signal motif. Residues Cys104 and Val126 each coordinate tRNA. The Proton donor role is filled by His137.

The protein belongs to the pancreatic ribonuclease family. As to quaternary structure, homodimer. Interacts with RNH1; inhibiting ANG ribonuclease activity. Interacts with PCNA.

It localises to the secreted. Its subcellular location is the nucleus. The protein localises to the nucleolus. The protein resides in the cytoplasm. It is found in the stress granule. Has weak tRNA ribonuclease activity by itself due to partial autoinhibition by its C-terminus (residues 139-145), which folds into a short alpha-helix that partially occludes the substrate-binding site. In absence of stress, the ribonuclease activity is inhibited by RNH1 in the cytoplasm. In response to stress, dissociates from RNH1 in the cytoplasm and associates with cytoplasmic ribosomes with vacant A-sites: ribosomes directly activate the tRNA ribonuclease activity of ANG by refolding the C-terminal alpha-helix. In response to stress, the angiogenic activity of ANG is inhibited by RNH1 in the nucleus. In terms of biological role, secreted ribonuclease that can either promote or restrict cell proliferation of target cells, depending on the context. Endocytosed in target cells via its receptor PLXNB2 and translocates to the cytoplasm or nucleus. Under stress conditions, localizes to the cytoplasm and promotes the assembly of stress granules (SGs): specifically cleaves a subset of tRNAs within anticodon loops to produce tRNA-derived stress-induced fragments (tiRNAs), resulting in translation repression and inhibition of cell proliferation. tiRNas also prevent formation of apoptosome, thereby promoting cell survival. Preferentially cleaves RNAs between a pyrimidine and an adenosine residue, suggesting that it cleaves the anticodon loop of tRNA(Ala) (32-UUAGCAU-38) after positions 33 and 36. Cleaves a subset of tRNAs, including tRNA(Ala), tRNA(Glu), tRNA(Gly), tRNA(Lys), tRNA(Val), tRNA(His), tRNA(Asp) and tRNA(Sec). Under growth conditions and in differentiated cells, translocates to the nucleus and stimulates ribosomal RNA (rRNA) transcription, including that containing the initiation site sequences of 45S rRNA, thereby promoting cell growth and proliferation. Angiogenin induces vascularization of normal and malignant tissues via its ability to promote rRNA transcription. Involved in hematopoietic stem and progenitor cell (HSPC) growth and survival by promoting rRNA transcription in growth conditions and inhibiting translation in response to stress, respectively. Mediates the crosstalk between myeloid and intestinal epithelial cells to protect the intestinal epithelial barrier integrity: secreted by myeloid cells and promotes intestinal epithelial cells proliferation and survival. Also mediates osteoclast-endothelial cell crosstalk in growing bone: produced by osteoclasts and protects the neighboring vascular cells against senescence by promoting rRNA transcription. This is Angiogenin from Mus musculus (Mouse).